A 303-amino-acid chain; its full sequence is Protease HtpX (303 aa).

The next 2 membrane-spanning stretches (helical) occupy residues 4–24 (IGLFLLTNLAVLVVFSIVFGI) and 42–62 (IASLAVMCAVYGMIGSMISLF). Residue His-149 participates in Zn(2+) binding. Glu-150 is an active-site residue. His-153 contributes to the Zn(2+) binding site. Helical transmembrane passes span 157–177 (GDMVTLALIQGVVNAFVMFFA) and 200–220 (FVTSIVMDILLGFLASAIVMW). Position 226 (Glu-226) interacts with Zn(2+).

The protein belongs to the peptidase M48B family. Requires Zn(2+) as cofactor.

It localises to the cell inner membrane. The protein is Protease HtpX of Psychrobacter sp. (strain PRwf-1).